Reading from the N-terminus, the 228-residue chain is uncharacterized protein (228 aa).

An ATP-binding site is contributed by 21 to 28 (GMIALGKT).

This is an uncharacterized protein from Mycoplasma genitalium (strain ATCC 33530 / DSM 19775 / NCTC 10195 / G37) (Mycoplasmoides genitalium).